A 108-amino-acid polypeptide reads, in one-letter code: AGKYFEATDKNFQTEILDSDKAVLVDFWASWCGPCMMLGPVIEQLADDYEGKAIIAKLNVDENPNIAGQYGIRSIPTMLIIKGGKVVDQMVGALPKNMIAKKIDEHIG.

Residues 2 to 108 (GKYFEATDKN…IAKKIDEHIG (107 aa)) form the Thioredoxin domain. Residues C32 and C35 are joined by a disulfide bond.

It belongs to the thioredoxin family.

In terms of biological role, participates in various redox reactions through the reversible oxidation of its active center dithiol to a disulfide and catalyzes dithiol-disulfide exchange reactions. The polypeptide is Thioredoxin (trxA) (Chlorobaculum thiosulfatiphilum (Chlorobium limicola f.sp. thiosulfatophilum)).